Here is a 112-residue protein sequence, read N- to C-terminus: Large ribosomal subunit protein uL22 (112 aa).

This sequence belongs to the universal ribosomal protein uL22 family. As to quaternary structure, part of the 50S ribosomal subunit.

Functionally, this protein binds specifically to 23S rRNA; its binding is stimulated by other ribosomal proteins, e.g. L4, L17, and L20. It is important during the early stages of 50S assembly. It makes multiple contacts with different domains of the 23S rRNA in the assembled 50S subunit and ribosome. In terms of biological role, the globular domain of the protein is located near the polypeptide exit tunnel on the outside of the subunit, while an extended beta-hairpin is found that lines the wall of the exit tunnel in the center of the 70S ribosome. In Caldanaerobacter subterraneus subsp. tengcongensis (strain DSM 15242 / JCM 11007 / NBRC 100824 / MB4) (Thermoanaerobacter tengcongensis), this protein is Large ribosomal subunit protein uL22.